Here is a 122-residue protein sequence, read N- to C-terminus: Small ribosomal subunit protein uS12c (122 aa).

This sequence belongs to the universal ribosomal protein uS12 family. As to quaternary structure, part of the 30S ribosomal subunit.

It localises to the plastid. It is found in the chloroplast. With S4 and S5 plays an important role in translational accuracy. Located at the interface of the 30S and 50S subunits. This is Small ribosomal subunit protein uS12c (rps12) from Mesostigma viride (Green alga).